Consider the following 158-residue polypeptide: Protein-export protein SecB (158 aa).

The protein belongs to the SecB family. In terms of assembly, homotetramer, a dimer of dimers. One homotetramer interacts with 1 SecA dimer.

The protein localises to the cytoplasm. Functionally, one of the proteins required for the normal export of preproteins out of the cell cytoplasm. It is a molecular chaperone that binds to a subset of precursor proteins, maintaining them in a translocation-competent state. It also specifically binds to its receptor SecA. The protein is Protein-export protein SecB of Photorhabdus laumondii subsp. laumondii (strain DSM 15139 / CIP 105565 / TT01) (Photorhabdus luminescens subsp. laumondii).